We begin with the raw amino-acid sequence, 191 residues long: Small ribosomal subunit protein eS7y (191 aa).

An N-acetylmethionine modification is found at methionine 1. A coiled-coil region spans residues 17–50 (TEFEEQVTQALFDLENTNQELKSELKDLYINQAV).

It belongs to the eukaryotic ribosomal protein eS7 family.

This chain is Small ribosomal subunit protein eS7y (RPS7B), found in Arabidopsis thaliana (Mouse-ear cress).